We begin with the raw amino-acid sequence, 120 residues long: NAD(P)H-quinone oxidoreductase subunit 3 (120 aa).

Transmembrane regions (helical) follow at residues 10–30 (LLVFLIVCSLLPILALGASAL), 64–84 (MFALVFVIFDVETVFLYPWAV), and 89–109 (LGLLAFVEALIFIAILVVGLV).

It belongs to the complex I subunit 3 family. As to quaternary structure, NDH-1 can be composed of about 15 different subunits; different subcomplexes with different compositions have been identified which probably have different functions.

Its subcellular location is the cellular thylakoid membrane. It carries out the reaction a plastoquinone + NADH + (n+1) H(+)(in) = a plastoquinol + NAD(+) + n H(+)(out). It catalyses the reaction a plastoquinone + NADPH + (n+1) H(+)(in) = a plastoquinol + NADP(+) + n H(+)(out). Functionally, NDH-1 shuttles electrons from an unknown electron donor, via FMN and iron-sulfur (Fe-S) centers, to quinones in the respiratory and/or the photosynthetic chain. The immediate electron acceptor for the enzyme in this species is believed to be plastoquinone. Couples the redox reaction to proton translocation, and thus conserves the redox energy in a proton gradient. Cyanobacterial NDH-1 also plays a role in inorganic carbon-concentration. The polypeptide is NAD(P)H-quinone oxidoreductase subunit 3 (Synechococcus sp. (strain JA-2-3B'a(2-13)) (Cyanobacteria bacterium Yellowstone B-Prime)).